The primary structure comprises 272 residues: MLEVSSHNVWTALAVTLAAGLATGLGSLMVVFAKKPNPRLLAFGLAFAGGAMVFVSLSEILNKSIASFSNAYNDKLGFTYGTLTFLGGMLLIMVIDRLVPNPHQSLSTDDPQFRDDNRAYIRRVGLLTAVAITAHNFPEGLATFFATLESPAVGMPLAFAIAIHNIPEGIAIAVPVYFATRNKFYAFGASLLSGLAEPIGAGIGYLLLSSVLSEAVFGAVFGVIAGVMVFLALDELLPAAKRYAQGHETVYGLVSGMGTLAISLVLFRYAAP.

Helical transmembrane passes span 12–32 (ALAV…MVVF), 40–60 (LLAF…LSEI), 76–96 (LGFT…MVID), 126–146 (LLTA…TFFA), 158–178 (AFAI…PVYF), 187–207 (FGAS…GYLL), 211–231 (VLSE…MVFL), and 247–267 (HETV…LVLF). The Fe(2+) site is built by asparagine 136 and glutamate 139. Positions 139 and 164 each coordinate Zn(2+). Fe(2+) contacts are provided by asparagine 165, glutamate 168, and glutamate 197. Position 168 (glutamate 168) interacts with Zn(2+).

It belongs to the ZIP transporter (TC 2.A.5) family. ZupT subfamily.

The protein localises to the cell inner membrane. The enzyme catalyses Zn(2+)(in) = Zn(2+)(out). Mediates zinc uptake. May also transport other divalent cations. The polypeptide is Zinc transporter ZupT (Xanthomonas campestris pv. campestris (strain ATCC 33913 / DSM 3586 / NCPPB 528 / LMG 568 / P 25)).